Here is a 182-residue protein sequence, read N- to C-terminus: Translation initiation factor IF-3 (182 aa).

The protein belongs to the IF-3 family. In terms of assembly, monomer.

Its subcellular location is the cytoplasm. IF-3 binds to the 30S ribosomal subunit and shifts the equilibrium between 70S ribosomes and their 50S and 30S subunits in favor of the free subunits, thus enhancing the availability of 30S subunits on which protein synthesis initiation begins. The sequence is that of Translation initiation factor IF-3 from Thermosynechococcus vestitus (strain NIES-2133 / IAM M-273 / BP-1).